Reading from the N-terminus, the 97-residue chain is Defensin alpha 4 (97 aa).

The first 19 residues, 1–19, serve as a signal peptide directing secretion; sequence MRIIAILAAILLVALQVRA. Residues 20–63 constitute a propeptide that is removed on maturation; the sequence is GPLQARGDEAPGQEQRGPEDQDISISFAWDKSSALQVSGSTRGM. Intrachain disulfides connect cysteine 65–cysteine 93, cysteine 67–cysteine 82, and cysteine 72–cysteine 92. Residue aspartate 97 is a propeptide.

This sequence belongs to the alpha-defensin family. As to quaternary structure, homodimer; homodimerization seems to be required for killing S.aureus, but not E.coli. Interacts with CD4. Interacts with Bacillus anthracis lef; homodimerization is required for the interaction. Post-translationally, the three-dimensional structure formed by the three intramolecular disulfide bridges is indispensable for effective bacterial killing.

It is found in the secreted. It localises to the cytoplasmic vesicle. Its subcellular location is the secretory vesicle. Functionally, host-defense peptide that has antimicrobial activity against Gram-negative bacteria, and to a lesser extent also against Gram-positive bacteria and fungi. Exhibits antimicrobial activity against Gram-negative E.coli and E.aerogenes and Gram-positive S.faecalis, S.aureus and B.cereus and the yeast C.albicans (in vitro). Inhibits corticotropin (ACTH)-stimulated corticosterone production (in vitro). Inhibits enzymatic activity of B.anthracis lef/anthrax lethal factor (in vitro). This is Defensin alpha 4 (DEFA4) from Pan troglodytes (Chimpanzee).